Consider the following 235-residue polypeptide: Pyridoxine 5'-phosphate synthase (235 aa).

Asn6 contacts 3-amino-2-oxopropyl phosphate. 8-9 (DH) contributes to the 1-deoxy-D-xylulose 5-phosphate binding site. Position 17 (Arg17) interacts with 3-amino-2-oxopropyl phosphate. Catalysis depends on His42, which acts as the Proton acceptor. Residues Arg44 and His49 each contribute to the 1-deoxy-D-xylulose 5-phosphate site. The Proton acceptor role is filled by Glu69. Thr99 contacts 1-deoxy-D-xylulose 5-phosphate. The active-site Proton donor is the His188. 3-amino-2-oxopropyl phosphate is bound by residues Gly189 and 210–211 (GH).

It belongs to the PNP synthase family. As to quaternary structure, homooctamer; tetramer of dimers.

The protein localises to the cytoplasm. It catalyses the reaction 3-amino-2-oxopropyl phosphate + 1-deoxy-D-xylulose 5-phosphate = pyridoxine 5'-phosphate + phosphate + 2 H2O + H(+). It functions in the pathway cofactor biosynthesis; pyridoxine 5'-phosphate biosynthesis; pyridoxine 5'-phosphate from D-erythrose 4-phosphate: step 5/5. Functionally, catalyzes the complicated ring closure reaction between the two acyclic compounds 1-deoxy-D-xylulose-5-phosphate (DXP) and 3-amino-2-oxopropyl phosphate (1-amino-acetone-3-phosphate or AAP) to form pyridoxine 5'-phosphate (PNP) and inorganic phosphate. The polypeptide is Pyridoxine 5'-phosphate synthase (Wolbachia sp. subsp. Drosophila simulans (strain wRi)).